Here is a 653-residue protein sequence, read N- to C-terminus: MIKITFPDGNFREYEAGITGWDIAGSISPRLQQDVLAAGVNGQVWDLHRQINEDAEVKLFKWDDAEGKHAFWHSSAHLMAEALEELYPGIKFGIGPAIENGFYYDVDPGEGISIKDADLPAIEKRMQDLAARKETIIRRDIAKADALRMFGDKDDQYKVELISELADGTITTYTQGGFTDLCRGPHLPNTGYIKAIKLLSVAGAYWRGDEKRKQLTRIYGISFPKKKMLDEYLELLEEAKKRDHRKIGKELELFAFSQNVGAGLPLWLPRGTQLRLRLEDFLKQIQKHFGYQQVITPHIGNKNLYITSGHYAKYGQDSFRPINTPQEGEEFMLKPMNCPHHCEIFKITPHSYRDLPIRLAEFGTVYRYEQSGELHGLTRVRGFTQDDAHLFCRPDQLKEEFCKVMDIIFIIFKALDFKNFEAQISLRDKVNREKYIGSEENWERAERAIIEACEEKGLPAVIEYGEAAFYGPKLDFMVKDALGRRWQLGTIQVDYNLPERFDLEYTGEDNKKHRPVMIHRAPFGSMERFVAVLIEHTAGKFPLWLTPDQVVVLPVSERFNEYAHRVAKELNQRDIRVQVDDRNEKVGRKIRDNELKRIPYMLIVGENESREEEVSVRKQGEGDMGIMKITTFAELIEKEVDDMISAWRKDYQN.

A TGS domain is found at 1–61 (MIKITFPDGN…NEDAEVKLFK (61 aa)). The segment at 243-542 (DHRKIGKELE…LIEHTAGKFP (300 aa)) is catalytic. Residues Cys-338, His-389, and His-519 each coordinate Zn(2+).

The protein belongs to the class-II aminoacyl-tRNA synthetase family. Homodimer. The cofactor is Zn(2+).

The protein resides in the cytoplasm. It catalyses the reaction tRNA(Thr) + L-threonine + ATP = L-threonyl-tRNA(Thr) + AMP + diphosphate + H(+). In terms of biological role, catalyzes the attachment of threonine to tRNA(Thr) in a two-step reaction: L-threonine is first activated by ATP to form Thr-AMP and then transferred to the acceptor end of tRNA(Thr). Also edits incorrectly charged L-seryl-tRNA(Thr). This chain is Threonine--tRNA ligase, found in Porphyromonas gingivalis (strain ATCC BAA-308 / W83).